The chain runs to 529 residues: Nucleolar protein 58 (529 aa).

T34 is modified (phosphothreonine). Residue S109 is modified to Phosphoserine. Residues 155–400 (ADKVDTMIVQ…LEARLRTLED (246 aa)) form a sufficient for interaction with NOPCHAP1 region. Residue K157 forms a Glycyl lysine isopeptide (Lys-Gly) (interchain with G-Cter in SUMO2) linkage. One can recognise a Nop domain in the interval 282–400 (IAPNVTVMVG…LEARLRTLED (119 aa)). Phosphoserine is present on residues S304 and S351. Glycyl lysine isopeptide (Lys-Gly) (interchain with G-Cter in SUMO2) cross-links involve residues K353, K411, K415, K422, K426, K441, K444, and K465. The interval 409–529 (TGKALAKTEK…KKKKKRENED (121 aa)) is disordered. The span at 414–427 (AKTEKYEHKSEVKT) shows a compositional bias: basic and acidic residues. K467 participates in a covalent cross-link: Glycyl lysine isopeptide (Lys-Gly) (interchain with G-Cter in SUMO); alternate. Residue K467 forms a Glycyl lysine isopeptide (Lys-Gly) (interchain with G-Cter in SUMO1); alternate linkage. A Glycyl lysine isopeptide (Lys-Gly) (interchain with G-Cter in SUMO2); alternate cross-link involves residue K467. The span at 469–481 (EEEEEEKVAEEEE) shows a compositional bias: acidic residues. S483 is subject to Phosphoserine. K485 participates in a covalent cross-link: Glycyl lysine isopeptide (Lys-Gly) (interchain with G-Cter in SUMO2). Over residues 485-495 (KKKKKRGKKKH) the composition is skewed to basic residues. K497 participates in a covalent cross-link: Glycyl lysine isopeptide (Lys-Gly) (interchain with G-Cter in SUMO); alternate. K497 participates in a covalent cross-link: Glycyl lysine isopeptide (Lys-Gly) (interchain with G-Cter in SUMO2); alternate. Phosphoserine occurs at positions 502 and 514. Residues 517-529 (KKKKKKKKRENED) are compositionally biased toward basic residues.

This sequence belongs to the NOP5/NOP56 family. As to quaternary structure, core component of box C/D small nucleolar ribonucleoprotein (snoRNP) particles; the core proteins SNU13, NOP56, NOP58 and FBL or FBLL1 assemble stepwise onto the snoRNA. Interacts with NOLC1/Nopp140. Interacts with NOPCHAP1, NUFIP1, RUVBL1 and RUVBL2; NOPCHAP1 bridges the association of NOP58 with RUVBL1:RUVBL2 and NUFIP1. Interacts with PIH1D1. Part of the small subunit (SSU) processome, composed of more than 70 proteins and the RNA chaperone small nucleolar RNA (snoRNA) U3. Post-translationally, sumoylation is essential for high-affinity binding to snoRNAs. In terms of tissue distribution, ubiquitous.

It is found in the nucleus. It localises to the nucleolus. The protein localises to the nucleoplasm. In terms of biological role, required for the biogenesis of box C/D snoRNAs such as U3, U8 and U14 snoRNAs. Part of the small subunit (SSU) processome, first precursor of the small eukaryotic ribosomal subunit. During the assembly of the SSU processome in the nucleolus, many ribosome biogenesis factors, an RNA chaperone and ribosomal proteins associate with the nascent pre-rRNA and work in concert to generate RNA folding, modifications, rearrangements and cleavage as well as targeted degradation of pre-ribosomal RNA by the RNA exosome. Core component of box C/D small nucleolar ribonucleoprotein (snoRNP) complexes that function in methylation of multiple sites on ribosomal RNAs (rRNAs) and messenger RNAs (mRNAs). This Homo sapiens (Human) protein is Nucleolar protein 58.